A 128-amino-acid polypeptide reads, in one-letter code: Fluoride-specific ion channel FluC (128 aa).

The next 4 membrane-spanning stretches (helical) occupy residues 5–25 (IVAI…LGLA), 35–55 (LGTL…AVVF), 67–87 (LFVI…SVEV), and 96–116 (FGWA…LTAL). Glycine 75 and threonine 78 together coordinate Na(+).

The protein belongs to the fluoride channel Fluc/FEX (TC 1.A.43) family.

Its subcellular location is the cell inner membrane. The enzyme catalyses fluoride(in) = fluoride(out). With respect to regulation, na(+) is not transported, but it plays an essential structural role and its presence is essential for fluoride channel function. Fluoride-specific ion channel. Important for reducing fluoride concentration in the cell, thus reducing its toxicity. The chain is Fluoride-specific ion channel FluC from Burkholderia vietnamiensis (strain G4 / LMG 22486) (Burkholderia cepacia (strain R1808)).